Consider the following 653-residue polypeptide: Chaperone protein DnaK (653 aa).

A Phosphothreonine; by autocatalysis modification is found at Thr-198. Residues 608-617 show a composition bias toward low complexity; sequence DPEAAAHAAG. Residues 608-653 are disordered; the sequence is DPEAAAHAAGMHGGAATGGGDGANKHGKGAEDVVEAEFEEVNDDKK. Positions 618-629 are enriched in gly residues; that stretch reads MHGGAATGGGDG. A compositionally biased stretch (acidic residues) spans 639–653; sequence DVVEAEFEEVNDDKK.

It belongs to the heat shock protein 70 family.

Functionally, acts as a chaperone. In Magnetococcus marinus (strain ATCC BAA-1437 / JCM 17883 / MC-1), this protein is Chaperone protein DnaK.